A 187-amino-acid polypeptide reads, in one-letter code: Protein GrpE (187 aa).

The span at 1–17 shows a compositional bias: low complexity; it reads MSNEEQQQPNPAAQAPE. The interval 1 to 27 is disordered; the sequence is MSNEEQQQPNPAAQAPEGAVTEGAAPE.

This sequence belongs to the GrpE family. As to quaternary structure, homodimer.

The protein localises to the cytoplasm. In terms of biological role, participates actively in the response to hyperosmotic and heat shock by preventing the aggregation of stress-denatured proteins, in association with DnaK and GrpE. It is the nucleotide exchange factor for DnaK and may function as a thermosensor. Unfolded proteins bind initially to DnaJ; upon interaction with the DnaJ-bound protein, DnaK hydrolyzes its bound ATP, resulting in the formation of a stable complex. GrpE releases ADP from DnaK; ATP binding to DnaK triggers the release of the substrate protein, thus completing the reaction cycle. Several rounds of ATP-dependent interactions between DnaJ, DnaK and GrpE are required for fully efficient folding. This Thioalkalivibrio sulfidiphilus (strain HL-EbGR7) protein is Protein GrpE.